A 117-amino-acid polypeptide reads, in one-letter code: Minor capsid protein p17 (117 aa).

Asparagine 12 carries N-linked (GlcNAc...) asparagine; by host glycosylation. A helical membrane pass occupies residues 39-59 (AIILGILILLVIILIIVAIVY). N-linked (GlcNAc...) asparagine; by host glycosylation is found at asparagine 61 and asparagine 97.

This sequence belongs to the asfivirus minor capsid protein p17 family. Interacts with the minor capsid protein M1249L and with the hexon capsid protein p72 capsomers; these interactions form a rigid zipper structure that stabilizes the capsomers. Interacts with host STING1.

The protein localises to the virion membrane. The protein resides in the host endoplasmic reticulum membrane. Functionally, together with the penton and the other minor capsid proteins (M1249L, p49), forms a complicated network immediately below the outer capsid shell, stabilizing the whole capsid. Three copies of p17 encircle each p72 capsomer in the inner capsid shell, anchoring p72 capsomers on the inner membrane. Required for the assembly of the capsid and icosahedral morphogenesis. Additionally, inhibits the host cGAS-STING pathway through its interaction with STING1 and subsequent interference of the recruitment of downstream components TBK1 and IKBKE. This Ornithodoros (relapsing fever ticks) protein is Minor capsid protein p17.